We begin with the raw amino-acid sequence, 117 residues long: UPF0102 protein FTF0898c (117 aa).

The protein belongs to the UPF0102 family.

This is UPF0102 protein FTF0898c from Francisella tularensis subsp. tularensis (strain FSC 198).